The following is a 312-amino-acid chain: Cytoplasmic dynein intermediate light chain DYN3 (312 aa).

Belongs to the dynein light intermediate chain DYN3 family. As to quaternary structure, the dynein complex consists of at least two heavy chains and a number of intermediate and light chains. Interacts with DYN1.

Its subcellular location is the cytoplasm. The protein resides in the cytoskeleton. Functionally, component of the cytoplasmic dynein which acts as a motor for the intracellular retrograde motility of vesicles and organelles along microtubules. May play an important role in the proper orientation of the mitotic spindle into the budding daughter cell yeast. Probably required for normal progression of the cell cycle. The polypeptide is Cytoplasmic dynein intermediate light chain DYN3 (DYN3) (Saccharomyces cerevisiae (strain ATCC 204508 / S288c) (Baker's yeast)).